A 246-amino-acid polypeptide reads, in one-letter code: Ribonuclease 3 (246 aa).

The 130-residue stretch at 18–147 (FKELQKKIGI…FIGALYLDQG (130 aa)) folds into the RNase III domain. Glu-60 provides a ligand contact to Mg(2+). Asp-64 is a catalytic residue. The Mg(2+) site is built by Asp-133 and Glu-136. Glu-136 is an active-site residue. A DRBM domain is found at 173-242 (DFKSQLQELV…AQMALQKLKT (70 aa)).

It belongs to the ribonuclease III family. In terms of assembly, homodimer. It depends on Mg(2+) as a cofactor.

The protein resides in the cytoplasm. It catalyses the reaction Endonucleolytic cleavage to 5'-phosphomonoester.. In terms of biological role, digests double-stranded RNA. Involved in the processing of primary rRNA transcript to yield the immediate precursors to the large and small rRNAs (23S and 16S). Processes some mRNAs, and tRNAs when they are encoded in the rRNA operon. Processes pre-crRNA and tracrRNA of type II CRISPR loci if present in the organism. The sequence is that of Ribonuclease 3 from Geobacillus sp. (strain WCH70).